A 212-amino-acid chain; its full sequence is Phosphoribosylformylglycinamidine synthase subunit PurQ (212 aa).

One can recognise a Glutamine amidotransferase type-1 domain in the interval 2–212 (RIAVLKFPGT…WLGLISWLRR (211 aa)). Cys-85 serves as the catalytic Nucleophile. Residues His-183, Glu-185, and His-191 contribute to the active site.

Part of the FGAM synthase complex composed of 1 PurL, 1 PurQ and 2 PurS subunits.

The protein localises to the cytoplasm. The enzyme catalyses N(2)-formyl-N(1)-(5-phospho-beta-D-ribosyl)glycinamide + L-glutamine + ATP + H2O = 2-formamido-N(1)-(5-O-phospho-beta-D-ribosyl)acetamidine + L-glutamate + ADP + phosphate + H(+). It catalyses the reaction L-glutamine + H2O = L-glutamate + NH4(+). Its pathway is purine metabolism; IMP biosynthesis via de novo pathway; 5-amino-1-(5-phospho-D-ribosyl)imidazole from N(2)-formyl-N(1)-(5-phospho-D-ribosyl)glycinamide: step 1/2. Part of the phosphoribosylformylglycinamidine synthase complex involved in the purines biosynthetic pathway. Catalyzes the ATP-dependent conversion of formylglycinamide ribonucleotide (FGAR) and glutamine to yield formylglycinamidine ribonucleotide (FGAM) and glutamate. The FGAM synthase complex is composed of three subunits. PurQ produces an ammonia molecule by converting glutamine to glutamate. PurL transfers the ammonia molecule to FGAR to form FGAM in an ATP-dependent manner. PurS interacts with PurQ and PurL and is thought to assist in the transfer of the ammonia molecule from PurQ to PurL. This Pyrobaculum aerophilum (strain ATCC 51768 / DSM 7523 / JCM 9630 / CIP 104966 / NBRC 100827 / IM2) protein is Phosphoribosylformylglycinamidine synthase subunit PurQ.